Here is a 138-residue protein sequence, read N- to C-terminus: ATP synthase epsilon chain (138 aa).

It belongs to the ATPase epsilon chain family. As to quaternary structure, F-type ATPases have 2 components, CF(1) - the catalytic core - and CF(0) - the membrane proton channel. CF(1) has five subunits: alpha(3), beta(3), gamma(1), delta(1), epsilon(1). CF(0) has three main subunits: a, b and c.

It localises to the cell membrane. Functionally, produces ATP from ADP in the presence of a proton gradient across the membrane. The polypeptide is ATP synthase epsilon chain (Streptococcus equi subsp. zooepidemicus (strain H70)).